Here is a 457-residue protein sequence, read N- to C-terminus: MNELTGADFKSATADDNKKLFIETYGCQMNVADSEVIASVMQMAGYSVAETLEEADAVFMNTCSIRDNAEQKILNRLEFFHSMKKKKKHLIVGVLGCMAERVKDDLIEHHHVDLVVGPDAYLTLPELIASVEAGEKAMNVELSTTETYRDVIPSRICGNHISGFVSIMRGCNNFCTYCIVPYTRGRERSRDVESILNEVADLVSKGYKEITLLGQNVNSYRFEKEGGEVVTFPMLLRLVAEAAPGIRVRFTTSHPKDMSDETLEVIAQVPNVCKHIHLPVQSGSSRILKLMNRKYTREWYLDRVAAIKRIVPDCGLTTDIFSGFHSETEEDHRESLSLMEACGYDAAFMFKYSERPGTYASKHLEDNVPEEIKVRRLNEIIALQNRLSAESNNRCIGKTYEVLVEGVSKRSRDQLFGRTEQNRVVVFDRGTHRIGDFVNVRITEASSATLKGEEVFS.

The 116-residue stretch at 18–133 (KKLFIETYGC…LPELIASVEA (116 aa)) folds into the MTTase N-terminal domain. Residues cysteine 27, cysteine 63, cysteine 97, cysteine 171, cysteine 175, and cysteine 178 each contribute to the [4Fe-4S] cluster site. A Radical SAM core domain is found at 157-390 (CGNHISGFVS…IALQNRLSAE (234 aa)). In terms of domain architecture, TRAM spans 393–456 (NRCIGKTYEV…SATLKGEEVF (64 aa)).

It belongs to the methylthiotransferase family. MiaB subfamily. Monomer. [4Fe-4S] cluster serves as cofactor.

The protein localises to the cytoplasm. The catalysed reaction is N(6)-dimethylallyladenosine(37) in tRNA + (sulfur carrier)-SH + AH2 + 2 S-adenosyl-L-methionine = 2-methylsulfanyl-N(6)-dimethylallyladenosine(37) in tRNA + (sulfur carrier)-H + 5'-deoxyadenosine + L-methionine + A + S-adenosyl-L-homocysteine + 2 H(+). Its function is as follows. Catalyzes the methylthiolation of N6-(dimethylallyl)adenosine (i(6)A), leading to the formation of 2-methylthio-N6-(dimethylallyl)adenosine (ms(2)i(6)A) at position 37 in tRNAs that read codons beginning with uridine. The sequence is that of tRNA-2-methylthio-N(6)-dimethylallyladenosine synthase from Bacteroides fragilis (strain ATCC 25285 / DSM 2151 / CCUG 4856 / JCM 11019 / LMG 10263 / NCTC 9343 / Onslow / VPI 2553 / EN-2).